We begin with the raw amino-acid sequence, 508 residues long: Maturase K (508 aa).

Belongs to the intron maturase 2 family. MatK subfamily.

It localises to the plastid. The protein resides in the chloroplast. In terms of biological role, usually encoded in the trnK tRNA gene intron. Probably assists in splicing its own and other chloroplast group II introns. This chain is Maturase K, found in Lupinus cosentinii (West Australian blue lupine).